The sequence spans 211 residues: Potassium-transporting ATPase KdpC subunit (211 aa).

The helical transmembrane segment at 13–35 (VVTMVLTGLLYPLAVTGLAQLLF) threads the bilayer.

The protein belongs to the KdpC family. In terms of assembly, the system is composed of three essential subunits: KdpA, KdpB and KdpC.

The protein resides in the cell inner membrane. Functionally, part of the high-affinity ATP-driven potassium transport (or Kdp) system, which catalyzes the hydrolysis of ATP coupled with the electrogenic transport of potassium into the cytoplasm. This subunit acts as a catalytic chaperone that increases the ATP-binding affinity of the ATP-hydrolyzing subunit KdpB by the formation of a transient KdpB/KdpC/ATP ternary complex. The polypeptide is Potassium-transporting ATPase KdpC subunit (Myxococcus xanthus (strain DK1622)).